A 163-amino-acid polypeptide reads, in one-letter code: Probable calcium-binding protein CML26 (163 aa).

At Ala2 the chain carries N-acetylalanine. 4 EF-hand domains span residues 16-51 (STDMELKKVFDKFDANGDGKISVSELGNVFKSMGTS), 52-82 (YTEEELNRVLDEIDIDCDGFINQEEFATICR), 85-120 (SSAVEIREAFDLYDQNKNGLISSSEIHKVLNRLGMT), and 121-156 (CSVEDCVRMIGHVDTDGDGNVNFEEFQKMMSSPELV). Ca(2+) is bound by residues Asp29, Asn31, Asp33, Lys35, Glu40, Asp65, Asp67, Asp69, Glu76, Asp98, Asn100, Asn102, Glu109, Asp134, Asp136, Asp138, Asn140, and Glu145.

In terms of biological role, potential calcium sensor. This chain is Probable calcium-binding protein CML26 (CML26), found in Arabidopsis thaliana (Mouse-ear cress).